The primary structure comprises 406 residues: Dematin (406 aa).

Disordered regions lie at residues 1 to 30 and 78 to 333; these read MERLQKQPLTSPGSVSSSRDSSVPGSPSSI and LPRS…DRGN. Over residues 11–29 the composition is skewed to low complexity; it reads SPGSVSSSRDSSVPGSPSS. Phosphoserine is present on residues S16, S18, S26, S92, S96, S105, S110, S113, S157, and S227. The segment covering 105-114 has biased composition (polar residues); it reads SPGTISQASA. The segment covering 217-228 has biased composition (acidic residues); sequence EEEEEEEDDDSG. An interaction with RASGRF2 region spans residues 225 to 309; sequence DDSGEEMKAL…SRLQSTDFSP (85 aa). 2 stretches are compositionally biased toward basic and acidic residues: residues 229–243 and 253–262; these read EEMKALRERQREELS and ILKEEMEKSL. A phosphoserine mark is found at S270, S280, S290, S304, S316, S334, S373, and S384. Polar residues predominate over residues 282–323; that stretch reads HAGTSKSSSLPAYGRTTLSRLQSTDFSPSGSEAESPGLQNGE. Positions 338-406 constitute an HP domain; sequence VLEQKIYPYE…NELKKKASLF (69 aa). S404 bears the Phosphoserine; by PKA mark.

It belongs to the villin/gelsolin family. In terms of assembly, monomeric; under reducing conditions. Self-associates. Exists under oxidizing condition as a trimer linked by disulfide bonds. Found in a complex with DMTN, F-actin and spectrin. Found in a complex with ADD2, DMTN and SLC2A1. Interacts with F-actin, ITPKB and spectrin. Interacts with SLC2A1 (via C-terminus cytoplasmic region). Interacts with RASGRF2. Phosphorylated. Phosphorylation at Ser-404 by PKA causes the C-terminal headpiece domain to associate with the N-terminal core domain, and leads to the inhibition of its actin bundling activity.

It localises to the cytoplasm. The protein localises to the cytosol. The protein resides in the perinuclear region. Its subcellular location is the cytoskeleton. It is found in the cell membrane. It localises to the membrane. The protein localises to the endomembrane system. The protein resides in the cell projection. Membrane-cytoskeleton-associated protein with F-actin-binding activity that induces F-actin bundles formation and stabilization. Its F-actin-bundling activity is reversibly regulated upon its phosphorylation by the cAMP-dependent protein kinase A (PKA). Binds to the erythrocyte membrane glucose transporter-1 SLC2A1/GLUT1, and hence stabilizes and attaches the spectrin-actin network to the erythrocytic plasma membrane. Plays a role in maintaining the functional integrity of PKA-activated erythrocyte shape and the membrane mechanical properties. Also plays a role as a modulator of actin dynamics in fibroblasts; acts as a negative regulator of the RhoA activation pathway. In platelets, functions as a regulator of internal calcium mobilization across the dense tubular system that affects platelet granule secretion pathways and aggregation. Also required for the formation of a diverse set of cell protrusions, such as filopodia and lamellipodia, necessary for platelet cell spreading, motility and migration. Acts as a tumor suppressor and inhibits malignant cell transformation. The polypeptide is Dematin (DMTN) (Bos taurus (Bovine)).